A 304-amino-acid chain; its full sequence is tRNA dimethylallyltransferase (304 aa).

Residue 10 to 17 (GPTASGKT) participates in ATP binding. 12–17 (TASGKT) contributes to the substrate binding site. 3 interaction with substrate tRNA regions span residues 35 to 38 (DSAL), 159 to 163 (QRLSR), and 240 to 245 (RCVGYR).

It belongs to the IPP transferase family. Monomer. Requires Mg(2+) as cofactor.

It catalyses the reaction adenosine(37) in tRNA + dimethylallyl diphosphate = N(6)-dimethylallyladenosine(37) in tRNA + diphosphate. In terms of biological role, catalyzes the transfer of a dimethylallyl group onto the adenine at position 37 in tRNAs that read codons beginning with uridine, leading to the formation of N6-(dimethylallyl)adenosine (i(6)A). This is tRNA dimethylallyltransferase from Shewanella sp. (strain W3-18-1).